Here is a 327-residue protein sequence, read N- to C-terminus: Spermidine/putrescine import ATP-binding protein PotA (327 aa).

The ABC transporter domain maps to 5-235 (IKVEAVEKHF…PKTLFVATFI (231 aa)). Position 37 to 44 (37 to 44 (GPSGCGKT)) interacts with ATP.

Belongs to the ABC transporter superfamily. Spermidine/putrescine importer (TC 3.A.1.11.1) family. As to quaternary structure, the complex is composed of two ATP-binding proteins (PotA), two transmembrane proteins (PotB and PotC) and a solute-binding protein (PotD).

The protein localises to the cell membrane. The enzyme catalyses ATP + H2O + polyamine-[polyamine-binding protein]Side 1 = ADP + phosphate + polyamineSide 2 + [polyamine-binding protein]Side 1.. Functionally, part of the ABC transporter complex PotABCD involved in spermidine/putrescine import. Responsible for energy coupling to the transport system. The protein is Spermidine/putrescine import ATP-binding protein PotA of Bacillus thuringiensis (strain Al Hakam).